Reading from the N-terminus, the 548-residue chain is Kinetochore and Eb1-associated basic protein (548 aa).

Disordered stretches follow at residues Met1 to Pro51 and Tyr82 to Lys181. Composition is skewed to basic and acidic residues over residues Arg20–Arg29, Arg104–Ser116, and Pro127–Ser141. An important for kinetochore and microtubule localization region spans residues Gln100 to Lys253. Residues Gln144–Arg155 are compositionally biased toward polar residues. An SXIP motif 1 motif is present at residues Thr149–Pro152. The segment covering Asn156–Lys165 has biased composition (basic and acidic residues). A compositionally biased stretch (polar residues) spans Ser166–Pro175. Positions Thr168–Pro171 match the SXIP motif 2 motif. The interval Ser237–Lys372 is CH (calponin-homology)-like region, which is not required for kinetochore and microtubule localization. Positions Tyr386–Glu457 form a coiled coil.

In terms of assembly, interacts with Eb1 via the two SxIP motifs; the interaction is not required for kebab kinetochore localization.

The protein localises to the cytoplasm. It localises to the perinuclear region. It is found in the chromosome. Its subcellular location is the centromere. The protein resides in the kinetochore. The protein localises to the cytoskeleton. It localises to the spindle. The sequence is that of Kinetochore and Eb1-associated basic protein from Drosophila melanogaster (Fruit fly).